The sequence spans 571 residues: Proline--tRNA ligase (571 aa).

The protein belongs to the class-II aminoacyl-tRNA synthetase family. ProS type 1 subfamily. As to quaternary structure, homodimer.

Its subcellular location is the cytoplasm. It catalyses the reaction tRNA(Pro) + L-proline + ATP = L-prolyl-tRNA(Pro) + AMP + diphosphate. Catalyzes the attachment of proline to tRNA(Pro) in a two-step reaction: proline is first activated by ATP to form Pro-AMP and then transferred to the acceptor end of tRNA(Pro). As ProRS can inadvertently accommodate and process non-cognate amino acids such as alanine and cysteine, to avoid such errors it has two additional distinct editing activities against alanine. One activity is designated as 'pretransfer' editing and involves the tRNA(Pro)-independent hydrolysis of activated Ala-AMP. The other activity is designated 'posttransfer' editing and involves deacylation of mischarged Ala-tRNA(Pro). The misacylated Cys-tRNA(Pro) is not edited by ProRS. This is Proline--tRNA ligase from Pseudomonas syringae pv. tomato (strain ATCC BAA-871 / DC3000).